We begin with the raw amino-acid sequence, 262 residues long: 2-keto-4-pentenoate hydratase (262 aa).

The protein belongs to the hydratase/decarboxylase family. MhpD subfamily. Requires a divalent metal cation as cofactor.

It carries out the reaction (S)-4-hydroxy-2-oxopentanoate = (2Z)-2-hydroxypenta-2,4-dienoate + H2O. Its pathway is aromatic compound metabolism; 3-phenylpropanoate degradation. Functionally, catalyzes the conversion of 2-hydroxypentadienoic acid (enolic form of 2-oxopent-4-enoate) to 4-hydroxy-2-ketopentanoic acid. This Burkholderia vietnamiensis (strain G4 / LMG 22486) (Burkholderia cepacia (strain R1808)) protein is 2-keto-4-pentenoate hydratase.